A 308-amino-acid chain; its full sequence is Elongation factor Ts (308 aa).

An involved in Mg(2+) ion dislocation from EF-Tu region spans residues 80-83 (TDFV).

It belongs to the EF-Ts family.

It is found in the cytoplasm. Functionally, associates with the EF-Tu.GDP complex and induces the exchange of GDP to GTP. It remains bound to the aminoacyl-tRNA.EF-Tu.GTP complex up to the GTP hydrolysis stage on the ribosome. The chain is Elongation factor Ts from Rhodopseudomonas palustris (strain ATCC BAA-98 / CGA009).